A 513-amino-acid polypeptide reads, in one-letter code: Flavonoid 3'-monooxygenase (513 aa).

Residues 1-21 form a helical membrane-spanning segment; the sequence is MATLFLTILLATVLFLILRIF. Over 22-513 the chain is Cytoplasmic; the sequence is SHRRNRSHNN…APNVYGLGSG (492 aa). Cys445 contributes to the heme binding site.

Belongs to the cytochrome P450 family. It depends on heme as a cofactor. In terms of tissue distribution, high expression in siliques and to a lower extent in stems, flowers and senescing leaves.

It localises to the endoplasmic reticulum membrane. It catalyses the reaction a 3'-unsubstituted flavone + reduced [NADPH--hemoprotein reductase] + O2 = a 3'-hydroxyflavone + oxidized [NADPH--hemoprotein reductase] + H2O + H(+). It participates in secondary metabolite biosynthesis; flavonoid biosynthesis. Functionally, catalyzes the 3'-hydroxylation of the flavonoid B-ring to the 3',4'-hydroxylated state. Convert naringenin to eriodictyol and dihydrokaempferol to dihydroquercetin. The polypeptide is Flavonoid 3'-monooxygenase (CYP75B1) (Arabidopsis thaliana (Mouse-ear cress)).